Consider the following 122-residue polypeptide: Large ribosomal subunit protein uL14 (122 aa).

This sequence belongs to the universal ribosomal protein uL14 family. In terms of assembly, part of the 50S ribosomal subunit. Forms a cluster with proteins L3 and L19. In the 70S ribosome, L14 and L19 interact and together make contacts with the 16S rRNA in bridges B5 and B8.

Functionally, binds to 23S rRNA. Forms part of two intersubunit bridges in the 70S ribosome. The protein is Large ribosomal subunit protein uL14 of Cereibacter sphaeroides (strain ATCC 17029 / ATH 2.4.9) (Rhodobacter sphaeroides).